Reading from the N-terminus, the 154-residue chain is Superoxide dismutase [Cu-Zn] (154 aa).

Positions 47, 49, and 64 each coordinate Cu cation. The cysteines at positions 58 and 147 are disulfide-linked. Zn(2+) contacts are provided by histidine 64, histidine 72, histidine 81, and aspartate 84. Histidine 121 is a Cu cation binding site. The span at 125 to 136 (DDLGKGGNEESL) shows a compositional bias: basic and acidic residues. Positions 125–144 (DDLGKGGNEESLKTGNAGPR) are disordered. Substrate is bound at residue arginine 144.

This sequence belongs to the Cu-Zn superoxide dismutase family. As to quaternary structure, homodimer. It depends on Cu cation as a cofactor. Zn(2+) is required as a cofactor.

Its subcellular location is the cytoplasm. The catalysed reaction is 2 superoxide + 2 H(+) = H2O2 + O2. Functionally, destroys radicals which are normally produced within the cells and which are toxic to biological systems. The protein is Superoxide dismutase [Cu-Zn] (SOD1) of Cordyceps tenuipes (Entomopathogenic fungus).